The sequence spans 342 residues: MQFIDRAEIEVEGGKGGDGIVAFRREKYVPAGGPAGGNGGKGGSVVLKAEENLQTLLDFRYARRFKADDGKRGGPNNCTGAMGKDTIVEVPCGTVVYDLETEEILGDLVKNGQTLCVAQGGKGGLGNKHFLSNQNRAPEYALPGLEGEHRNLRLELKLLAEVGIIGLPNAGKSTLIASLSAARPKIADYPFTTLVPNLGVVRKPTGDGTVFADIPGLIAGAHEGIGLGHEFLRHIERTRLLLHLVDVTSADPIADYEVIQQELTAYGRGLSDRPQIIALNKVDACDQDTLDLIAEELQQLSQSEIFTISAVTKTGVEELLQAIWHRLDQATSNHQDSSLPLV.

The region spanning Met-1–Leu-159 is the Obg domain. Residues Ala-160–Asp-328 form the OBG-type G domain. GTP contacts are provided by residues Gly-166–Ser-173, Phe-191–Val-195, Asp-213–Gly-216, Asn-280–Asp-283, and Ser-309–Val-311. The Mg(2+) site is built by Ser-173 and Thr-193.

The protein belongs to the TRAFAC class OBG-HflX-like GTPase superfamily. OBG GTPase family. In terms of assembly, monomer. Requires Mg(2+) as cofactor.

The protein localises to the cytoplasm. Functionally, an essential GTPase which binds GTP, GDP and possibly (p)ppGpp with moderate affinity, with high nucleotide exchange rates and a fairly low GTP hydrolysis rate. Plays a role in control of the cell cycle, stress response, ribosome biogenesis and in those bacteria that undergo differentiation, in morphogenesis control. The chain is GTPase Obg from Crocosphaera subtropica (strain ATCC 51142 / BH68) (Cyanothece sp. (strain ATCC 51142)).